A 577-amino-acid polypeptide reads, in one-letter code: Phosphoethanolamine transferase EptC (577 aa).

The next 5 membrane-spanning stretches (helical) occupy residues 17–37 (LGWA…IIYI), 44–64 (NGIR…FLFP), 69–89 (IIAA…LCYY), 119–139 (YFSL…VLLW), and 154–174 (VVSF…NTFI).

The protein belongs to the phosphoethanolamine transferase family. EptC/CptA subfamily.

The protein localises to the cell inner membrane. It participates in bacterial outer membrane biogenesis; LPS core biosynthesis. Functionally, catalyzes the addition of a phosphoethanolamine moiety to the outer membrane lipopolysaccharide core. Plays a role in the pathogenesis of E.coli meningitis. Required for invasion of E.coli K1 into brain microvascular endothelial cells (BMEC). Contributes to E.coli traversal across the blood-brain barrier. This Escherichia coli O18:K1:H7 (strain RS218 / NMEC) protein is Phosphoethanolamine transferase EptC (eptC).